We begin with the raw amino-acid sequence, 818 residues long: Serine/threonine-protein phosphatase 4 regulatory subunit 3 (818 aa).

A WH1 domain is found at 1-100 (MTDTRRRVKV…DEIWEKICQV (100 aa)). Residues 670–681 (FNTDEEDLEDGE) are compositionally biased toward acidic residues. The disordered stretch occupies residues 670-818 (FNTDEEDLED…PLSKKSKLSS (149 aa)). Over residues 703–718 (FMERKKLKDSEEKEVL) the composition is skewed to basic and acidic residues. Over residues 729 to 775 (SPSFKLSFSSSPKASLSSPPTASLHPGSPGSPSSPGTGARSSPPSAA) the composition is skewed to low complexity. 2 positions are modified to phosphoserine: Ser769 and Ser770. Positions 788–803 (YPDDDEEDEDEEDADS) are enriched in acidic residues.

This sequence belongs to the SMEK family. Serine/threonine-protein phosphatase 4 (PP4) occurs in different assemblies of the catalytic and one or more regulatory subunits.

Regulatory subunit of serine/threonine-protein phosphatase 4. This Danio rerio (Zebrafish) protein is Serine/threonine-protein phosphatase 4 regulatory subunit 3 (smek1).